Reading from the N-terminus, the 398-residue chain is Succinate--CoA ligase [ADP-forming] subunit beta (398 aa).

Residues 9 to 237 (RDLFETHGVP…AGGLDILELK (229 aa)) form the ATP-grasp domain. ATP contacts are provided by residues K45, 52–54 (GRG), A94, and E99. Residues N191 and D205 each contribute to the Mg(2+) site. Substrate-binding positions include N257 and 319-321 (GIT).

Belongs to the succinate/malate CoA ligase beta subunit family. As to quaternary structure, heterotetramer of two alpha and two beta subunits. The cofactor is Mg(2+).

It carries out the reaction succinate + ATP + CoA = succinyl-CoA + ADP + phosphate. It catalyses the reaction GTP + succinate + CoA = succinyl-CoA + GDP + phosphate. Its pathway is carbohydrate metabolism; tricarboxylic acid cycle; succinate from succinyl-CoA (ligase route): step 1/1. Its function is as follows. Succinyl-CoA synthetase functions in the citric acid cycle (TCA), coupling the hydrolysis of succinyl-CoA to the synthesis of either ATP or GTP and thus represents the only step of substrate-level phosphorylation in the TCA. The beta subunit provides nucleotide specificity of the enzyme and binds the substrate succinate, while the binding sites for coenzyme A and phosphate are found in the alpha subunit. In Corynebacterium glutamicum (strain ATCC 13032 / DSM 20300 / JCM 1318 / BCRC 11384 / CCUG 27702 / LMG 3730 / NBRC 12168 / NCIMB 10025 / NRRL B-2784 / 534), this protein is Succinate--CoA ligase [ADP-forming] subunit beta.